Here is a 171-residue protein sequence, read N- to C-terminus: 3-hydroxydecanoyl-[acyl-carrier-protein] dehydratase (171 aa).

Histidine 70 is an active-site residue.

This sequence belongs to the thioester dehydratase family. FabA subfamily. In terms of assembly, homodimer.

Its subcellular location is the cytoplasm. It carries out the reaction a (3R)-hydroxyacyl-[ACP] = a (2E)-enoyl-[ACP] + H2O. The enzyme catalyses (3R)-hydroxydecanoyl-[ACP] = (2E)-decenoyl-[ACP] + H2O. The catalysed reaction is (2E)-decenoyl-[ACP] = (3Z)-decenoyl-[ACP]. The protein operates within lipid metabolism; fatty acid biosynthesis. Necessary for the introduction of cis unsaturation into fatty acids. Catalyzes the dehydration of (3R)-3-hydroxydecanoyl-ACP to E-(2)-decenoyl-ACP and then its isomerization to Z-(3)-decenoyl-ACP. Can catalyze the dehydratase reaction for beta-hydroxyacyl-ACPs with saturated chain lengths up to 16:0, being most active on intermediate chain length. This Methylobacillus flagellatus (strain ATCC 51484 / DSM 6875 / VKM B-1610 / KT) protein is 3-hydroxydecanoyl-[acyl-carrier-protein] dehydratase.